Reading from the N-terminus, the 1722-residue chain is Signal-induced proliferation-associated 1-like protein 2 (1722 aa).

A compositionally biased stretch (basic and acidic residues) spans 1-12 (MSDPRQSQEEKH). 2 disordered regions span residues 1-29 (MSDP…RIMQ) and 42-72 (NGNM…PAVP). The segment covering 45–56 (MGPTTSLNASNS) has biased composition (polar residues). Phosphoserine is present on S148. Residues 360-377 (GASAASQTQMPTGQTGNC) are compositionally biased toward polar residues. The interval 360 to 401 (GASAASQTQMPTGQTGNCESPLGSKEDLNSKENLDADEGDGK) is disordered. 2 positions are modified to phosphoserine: S379 and S383. Basic and acidic residues predominate over residues 383 to 401 (SKEDLNSKENLDADEGDGK). The region spanning 595 to 812 (LLKLDEQGLS…RTRQEYLKDL (218 aa)) is the Rap-GAP domain. The 77-residue stretch at 950 to 1026 (EMTLRRNGLG…VKVVIIQPHD (77 aa)) folds into the PDZ domain. Phosphoserine is present on S1029. 2 disordered regions span residues 1067 to 1245 (HRVP…FGSG) and 1330 to 1360 (EGSM…SKSS). 2 stretches are compositionally biased toward low complexity: residues 1093–1102 (QQLLQQAQAA) and 1119–1130 (SSPSNQSSSSDP). 2 stretches are compositionally biased toward basic and acidic residues: residues 1164–1183 (DGAR…ETKW) and 1194–1217 (YKER…HIGD). The span at 1219 to 1236 (SCSSHSSSNTLSSNTSSN) shows a compositional bias: low complexity. S1244 bears the Phosphoserine mark. Low complexity predominate over residues 1337–1360 (SEISSHSSGSHHSGSPSAHCSKSS). Phosphoserine is present on residues S1461, S1472, S1478, S1488, S1549, S1552, and S1591. A coiled-coil region spans residues 1654 to 1712 (LTGKVNQLELILRQLQTDLRKEKQDKAVLQAEVQHLRQDNMRLQEESQTATAQLRKFTE).

The chain is Signal-induced proliferation-associated 1-like protein 2 (SIPA1L2) from Homo sapiens (Human).